A 599-amino-acid polypeptide reads, in one-letter code: Phosphomethylpyrimidine synthase (599 aa).

Over residues 1-16 (MSAASANSVTNPSAWE) the composition is skewed to polar residues. Disordered regions lie at residues 1-53 (MSAA…PNDP) and 82-108 (EDTEEYAGRERNLADDGRSAQRRGAAS). A compositionally biased stretch (basic and acidic residues) spans 87 to 100 (YAGRERNLADDGRS). Residues Asn192, Met221, Tyr250, His286, 306 to 308 (SRG), 347 to 350 (DGLR), and Glu386 each bind substrate. His390 lines the Zn(2+) pocket. Tyr413 serves as a coordination point for substrate. His454 is a Zn(2+) binding site. [4Fe-4S] cluster-binding residues include Cys534, Cys537, and Cys542.

This sequence belongs to the ThiC family. [4Fe-4S] cluster is required as a cofactor.

The enzyme catalyses 5-amino-1-(5-phospho-beta-D-ribosyl)imidazole + S-adenosyl-L-methionine = 4-amino-2-methyl-5-(phosphooxymethyl)pyrimidine + CO + 5'-deoxyadenosine + formate + L-methionine + 3 H(+). It functions in the pathway cofactor biosynthesis; thiamine diphosphate biosynthesis. In terms of biological role, catalyzes the synthesis of the hydroxymethylpyrimidine phosphate (HMP-P) moiety of thiamine from aminoimidazole ribotide (AIR) in a radical S-adenosyl-L-methionine (SAM)-dependent reaction. This is Phosphomethylpyrimidine synthase from Corynebacterium diphtheriae (strain ATCC 700971 / NCTC 13129 / Biotype gravis).